The primary structure comprises 251 residues: Regulator of G-protein signaling 7-binding protein B (251 aa).

Residues Met1–Arg43 form a disordered region. Positions Ser25–Arg43 are enriched in basic and acidic residues. Residues Cys246 and Cys247 are each lipidated (S-palmitoyl cysteine).

The protein belongs to the RGS7BP/RGS9BP family. In terms of processing, palmitoylated. Undergoes rapid palmitoylation turnover. Palmitoylation regulates the cell membrane and nuclear shuttling and the regulation of GPCR signaling. Upon depalmitoylation, it is targeted from the plasma membrane into the nucleus. GPCR signaling inhibits depalmitoylation and promotes localization to the plasma membrane.

It localises to the nucleus. The protein localises to the cytoplasm. It is found in the cell membrane. In terms of biological role, regulator of G protein-coupled receptor (GPCR) signaling. Regulatory subunit of the R7-Gbeta5 complexes that acts by controlling the subcellular location of the R7-Gbeta5 complexes. When palmitoylated, it targets the R7-Gbeta5 complexes to the plasma membrane, leading to inhibit G protein alpha subunits. When it is unpalmitoylated, the R7-Gbeta5 complexes undergo a nuclear/cytoplasmic shuttling. The polypeptide is Regulator of G-protein signaling 7-binding protein B (rgs7bpb) (Danio rerio (Zebrafish)).